The following is a 219-amino-acid chain: Elongation factor Ts (219 aa).

Residues 82–85 are involved in Mg(2+) ion dislocation from EF-Tu; sequence TDFV.

It belongs to the EF-Ts family.

It is found in the cytoplasm. Functionally, associates with the EF-Tu.GDP complex and induces the exchange of GDP to GTP. It remains bound to the aminoacyl-tRNA.EF-Tu.GTP complex up to the GTP hydrolysis stage on the ribosome. This is Elongation factor Ts from Synechococcus sp. (strain CC9902).